A 328-amino-acid chain; its full sequence is dITP/XTP pyrophosphatase (328 aa).

The unknown stretch occupies residues 1–129 (MSEKIYEYKD…ATSEQGFGDI (129 aa)). An NTP pyrophosphatase region spans residues 130 to 324 (ILIATRNEGK…KLMEVFPAWQ (195 aa)). Residue 134–139 (TRNEGK) coordinates substrate. Catalysis depends on D196, which acts as the Proton acceptor. D196 contributes to the Mg(2+) binding site. Substrate is bound by residues S197, 280 to 283 (FGYD), K303, and 308 to 309 (HR).

The protein belongs to the HAM1 NTPase family. Homodimer. It depends on Mg(2+) as a cofactor.

The enzyme catalyses XTP + H2O = XMP + diphosphate + H(+). The catalysed reaction is dITP + H2O = dIMP + diphosphate + H(+). It carries out the reaction ITP + H2O = IMP + diphosphate + H(+). Functionally, pyrophosphatase that catalyzes the hydrolysis of nucleoside triphosphates to their monophosphate derivatives, with a high preference for the non-canonical purine nucleotides XTP (xanthosine triphosphate), dITP (deoxyinosine triphosphate) and ITP. Seems to function as a house-cleaning enzyme that removes non-canonical purine nucleotides from the nucleotide pool, thus preventing their incorporation into DNA/RNA and avoiding chromosomal lesions. This chain is dITP/XTP pyrophosphatase, found in Streptococcus pyogenes serotype M1.